The sequence spans 418 residues: F-box protein At5g03970 (418 aa).

An F-box domain is found at S18–A66.

The sequence is that of F-box protein At5g03970 from Arabidopsis thaliana (Mouse-ear cress).